Here is a 317-residue protein sequence, read N- to C-terminus: ADP-L-glycero-D-manno-heptose-6-epimerase (317 aa).

NADP(+)-binding positions include 10–11 (FI), 31–32 (DD), Gln-38, Lys-53, 75–79 (QGACS), and Asn-92. Tyr-139 (proton acceptor) is an active-site residue. Lys-143 is an NADP(+) binding site. Asn-166 serves as a coordination point for substrate. NADP(+)-binding residues include Val-167 and Lys-175. Residue Lys-175 is the Proton acceptor of the active site. Substrate is bound by residues Gly-177, His-184, 198 to 201 (FEGV), Arg-211, and Tyr-275.

It belongs to the NAD(P)-dependent epimerase/dehydratase family. HldD subfamily. In terms of assembly, homopentamer. The cofactor is NADP(+).

The catalysed reaction is ADP-D-glycero-beta-D-manno-heptose = ADP-L-glycero-beta-D-manno-heptose. It participates in nucleotide-sugar biosynthesis; ADP-L-glycero-beta-D-manno-heptose biosynthesis; ADP-L-glycero-beta-D-manno-heptose from D-glycero-beta-D-manno-heptose 7-phosphate: step 4/4. Its function is as follows. Catalyzes the interconversion between ADP-D-glycero-beta-D-manno-heptose and ADP-L-glycero-beta-D-manno-heptose via an epimerization at carbon 6 of the heptose. In Shewanella frigidimarina (strain NCIMB 400), this protein is ADP-L-glycero-D-manno-heptose-6-epimerase.